The chain runs to 599 residues: Aspartate--tRNA(Asp/Asn) ligase (599 aa).

E172 provides a ligand contact to L-aspartate. Positions Q196–K199 are aspartate. Residue R218 participates in L-aspartate binding. Residues R218 to E220 and Q227 contribute to the ATP site. L-aspartate is bound at residue H455. An ATP-binding site is contributed by E489. R496 contacts L-aspartate. G541 to R544 is an ATP binding site.

Belongs to the class-II aminoacyl-tRNA synthetase family. Type 1 subfamily. As to quaternary structure, homodimer.

The protein resides in the cytoplasm. It carries out the reaction tRNA(Asx) + L-aspartate + ATP = L-aspartyl-tRNA(Asx) + AMP + diphosphate. Aspartyl-tRNA synthetase with relaxed tRNA specificity since it is able to aspartylate not only its cognate tRNA(Asp) but also tRNA(Asn). Reaction proceeds in two steps: L-aspartate is first activated by ATP to form Asp-AMP and then transferred to the acceptor end of tRNA(Asp/Asn). The polypeptide is Aspartate--tRNA(Asp/Asn) ligase (Herminiimonas arsenicoxydans).